The chain runs to 372 residues: MEFTLEATSKNARACTIKTAHSTIKTPVFMPVGTLGSVKALDMEDVLDLLGAEIILANTYHMYLRPGDETVAKMGKLHGFTTYPKSFLTDSGGFQAFSLSDISKASENGIEFRSHIDGSKHFFTPKKVIDIQHNLGSDIMMILDDLVALPATGERIALSIERTTAWAKESIEYFRKKQKEGIGAEQNIFAIIQGGTDKAFRTKSATELCALDFDGFAIGGLSVGELNNEMYDTVEHTVKYMPKDKPRYLMGVGTPEDLIENIERGIDMFDCVMPTRNARNGTLFTSFGRLNIKGATYKEDAQPVDSECECLTCKRYSRAYLNHLFRSREIAYFRLATIHNLHYYLNLMREAREAILEDKYAEFKAEFYRKRG.

Asp-90 acts as the Proton acceptor in catalysis. Substrate contacts are provided by residues 90-94 (DSGGF), Asp-144, Gln-193, and Gly-220. The interval 251 to 257 (GVGTPED) is RNA binding. Residue Asp-270 is the Nucleophile of the active site. The segment at 275-279 (TRNAR) is RNA binding; important for wobble base 34 recognition. Residues Cys-308, Cys-310, Cys-313, and His-339 each coordinate Zn(2+).

This sequence belongs to the queuine tRNA-ribosyltransferase family. In terms of assembly, homodimer. Within each dimer, one monomer is responsible for RNA recognition and catalysis, while the other monomer binds to the replacement base PreQ1. Requires Zn(2+) as cofactor.

It catalyses the reaction 7-aminomethyl-7-carbaguanine + guanosine(34) in tRNA = 7-aminomethyl-7-carbaguanosine(34) in tRNA + guanine. The protein operates within tRNA modification; tRNA-queuosine biosynthesis. Its function is as follows. Catalyzes the base-exchange of a guanine (G) residue with the queuine precursor 7-aminomethyl-7-deazaguanine (PreQ1) at position 34 (anticodon wobble position) in tRNAs with GU(N) anticodons (tRNA-Asp, -Asn, -His and -Tyr). Catalysis occurs through a double-displacement mechanism. The nucleophile active site attacks the C1' of nucleotide 34 to detach the guanine base from the RNA, forming a covalent enzyme-RNA intermediate. The proton acceptor active site deprotonates the incoming PreQ1, allowing a nucleophilic attack on the C1' of the ribose to form the product. After dissociation, two additional enzymatic reactions on the tRNA convert PreQ1 to queuine (Q), resulting in the hypermodified nucleoside queuosine (7-(((4,5-cis-dihydroxy-2-cyclopenten-1-yl)amino)methyl)-7-deazaguanosine). In Sulfurimonas denitrificans (strain ATCC 33889 / DSM 1251) (Thiomicrospira denitrificans (strain ATCC 33889 / DSM 1251)), this protein is Queuine tRNA-ribosyltransferase.